Here is a 253-residue protein sequence, read N- to C-terminus: Probable transcriptional regulatory protein RAF_ORF0717 (253 aa).

The tract at residues 1-21 is disordered; it reads MAGHSKFKNIQHRKGAQDKKR.

This sequence belongs to the TACO1 family.

It is found in the cytoplasm. In Rickettsia africae (strain ESF-5), this protein is Probable transcriptional regulatory protein RAF_ORF0717.